Here is a 681-residue protein sequence, read N- to C-terminus: DNA-directed RNA polymerase subunit beta' (681 aa).

Positions 69, 71, 87, and 90 each coordinate Zn(2+). The Mg(2+) site is built by D489, D491, and D493.

The protein belongs to the RNA polymerase beta' chain family. RpoC1 subfamily. In terms of assembly, in plastids the minimal PEP RNA polymerase catalytic core is composed of four subunits: alpha, beta, beta', and beta''. When a (nuclear-encoded) sigma factor is associated with the core the holoenzyme is formed, which can initiate transcription. Mg(2+) serves as cofactor. It depends on Zn(2+) as a cofactor.

The protein resides in the plastid. The protein localises to the chloroplast. It carries out the reaction RNA(n) + a ribonucleoside 5'-triphosphate = RNA(n+1) + diphosphate. Its function is as follows. DNA-dependent RNA polymerase catalyzes the transcription of DNA into RNA using the four ribonucleoside triphosphates as substrates. The chain is DNA-directed RNA polymerase subunit beta' from Nicotiana sylvestris (Wood tobacco).